We begin with the raw amino-acid sequence, 147 residues long: Large ribosomal subunit protein uL13 (147 aa).

The protein belongs to the universal ribosomal protein uL13 family. Part of the 50S ribosomal subunit.

Its function is as follows. This protein is one of the early assembly proteins of the 50S ribosomal subunit, although it is not seen to bind rRNA by itself. It is important during the early stages of 50S assembly. The chain is Large ribosomal subunit protein uL13 from Salinispora arenicola (strain CNS-205).